A 260-amino-acid polypeptide reads, in one-letter code: Indole-3-glycerol phosphate synthase (260 aa).

It belongs to the TrpC family.

It carries out the reaction 1-(2-carboxyphenylamino)-1-deoxy-D-ribulose 5-phosphate + H(+) = (1S,2R)-1-C-(indol-3-yl)glycerol 3-phosphate + CO2 + H2O. Its pathway is amino-acid biosynthesis; L-tryptophan biosynthesis; L-tryptophan from chorismate: step 4/5. The sequence is that of Indole-3-glycerol phosphate synthase from Bacteroides thetaiotaomicron (strain ATCC 29148 / DSM 2079 / JCM 5827 / CCUG 10774 / NCTC 10582 / VPI-5482 / E50).